A 469-amino-acid polypeptide reads, in one-letter code: Adenosylhomocysteinase (469 aa).

Residues Thr63, Asp139, and Glu164 each contribute to the substrate site. Residue 165-167 (TTT) coordinates NAD(+). Residues Lys194 and Asp198 each coordinate substrate. Residues Asn199, 228–233 (GYGDVG), Glu251, Asn300, 321–323 (IGH), and Asn375 contribute to the NAD(+) site.

This sequence belongs to the adenosylhomocysteinase family. It depends on NAD(+) as a cofactor.

The protein resides in the cytoplasm. The catalysed reaction is S-adenosyl-L-homocysteine + H2O = L-homocysteine + adenosine. The protein operates within amino-acid biosynthesis; L-homocysteine biosynthesis; L-homocysteine from S-adenosyl-L-homocysteine: step 1/1. Its function is as follows. May play a key role in the regulation of the intracellular concentration of adenosylhomocysteine. The sequence is that of Adenosylhomocysteinase from Pseudomonas entomophila (strain L48).